A 270-amino-acid polypeptide reads, in one-letter code: NAD(P)H-hydrate epimerase (270 aa).

A YjeF N-terminal domain is found at 25–234 (FQQLMDLMQN…DLLAPEAIYQ (210 aa)). Residue 73–77 (DNGGQ) participates in (6S)-NADPHX binding. N74 and D144 together coordinate K(+). (6S)-NADPHX contacts are provided by residues 148–154 (GVGLYGH) and E177. T180 is a K(+) binding site.

The protein belongs to the NnrE/AIBP family. K(+) serves as cofactor.

The catalysed reaction is (6R)-NADHX = (6S)-NADHX. It carries out the reaction (6R)-NADPHX = (6S)-NADPHX. Its function is as follows. Catalyzes the epimerization of the S- and R-forms of NAD(P)HX, a damaged form of NAD(P)H that is a result of enzymatic or heat-dependent hydration. This is a prerequisite for the S-specific NAD(P)H-hydrate dehydratase to allow the repair of both epimers of NAD(P)HX. This Legionella pneumophila serogroup 1 (strain 2300/99 Alcoy) protein is NAD(P)H-hydrate epimerase.